Reading from the N-terminus, the 466-residue chain is Exodeoxyribonuclease 7 large subunit (466 aa).

This sequence belongs to the XseA family. Heterooligomer composed of large and small subunits.

The protein localises to the cytoplasm. It carries out the reaction Exonucleolytic cleavage in either 5'- to 3'- or 3'- to 5'-direction to yield nucleoside 5'-phosphates.. Its function is as follows. Bidirectionally degrades single-stranded DNA into large acid-insoluble oligonucleotides, which are then degraded further into small acid-soluble oligonucleotides. In Ruthia magnifica subsp. Calyptogena magnifica, this protein is Exodeoxyribonuclease 7 large subunit.